The following is a 395-amino-acid chain: Putative pyridoxal phosphate-dependent acyltransferase (395 aa).

110–111 is a binding site for pyridoxal 5'-phosphate; it reads GF. His-135 serves as a coordination point for substrate. Pyridoxal 5'-phosphate contacts are provided by residues Ser-185, 210–213, and 240–243; these read DDAH and TLSK. Lys-243 carries the post-translational modification N6-(pyridoxal phosphate)lysine. Residue Thr-357 coordinates substrate.

It belongs to the class-II pyridoxal-phosphate-dependent aminotransferase family. As to quaternary structure, homodimer. It depends on pyridoxal 5'-phosphate as a cofactor.

The sequence is that of Putative pyridoxal phosphate-dependent acyltransferase from Staphylococcus aureus (strain COL).